A 119-amino-acid polypeptide reads, in one-letter code: Protein TusC (119 aa).

It belongs to the DsrF/TusC family. Heterohexamer, formed by a dimer of trimers. The hexameric TusBCD complex contains 2 copies each of TusB, TusC and TusD. The TusBCD complex interacts with TusE.

The protein resides in the cytoplasm. Functionally, part of a sulfur-relay system required for 2-thiolation of 5-methylaminomethyl-2-thiouridine (mnm(5)s(2)U) at tRNA wobble positions. The polypeptide is Protein TusC (Buchnera aphidicola subsp. Acyrthosiphon pisum (strain APS) (Acyrthosiphon pisum symbiotic bacterium)).